A 251-amino-acid chain; its full sequence is Triosephosphate isomerase 1 (251 aa).

9–11 (NWK) contributes to the substrate binding site. The Electrophile role is filled by His-95. Glu-167 serves as the catalytic Proton acceptor. Residues Gly-173, Ser-213, and 234-235 (GG) contribute to the substrate site.

Belongs to the triosephosphate isomerase family. In terms of assembly, homodimer.

Its subcellular location is the cytoplasm. The enzyme catalyses D-glyceraldehyde 3-phosphate = dihydroxyacetone phosphate. It participates in carbohydrate biosynthesis; gluconeogenesis. Its pathway is carbohydrate degradation; glycolysis; D-glyceraldehyde 3-phosphate from glycerone phosphate: step 1/1. Functionally, involved in the gluconeogenesis. Catalyzes stereospecifically the conversion of dihydroxyacetone phosphate (DHAP) to D-glyceraldehyde-3-phosphate (G3P). This is Triosephosphate isomerase 1 from Listeria monocytogenes serovar 1/2a (strain ATCC BAA-679 / EGD-e).